The sequence spans 222 residues: Ubiquitin-conjugating enzyme E2 S (222 aa).

Methionine 1 bears the N-acetylmethionine mark. The UBC core domain maps to 11–157; that stretch reads HIIRLVYKEV…ARLLTEIHGG (147 aa). Cysteine 95 serves as the catalytic Glycyl thioester intermediate. Positions 156 to 222 are disordered; sequence GGAGGPSGRA…TDKKRALRRL (67 aa). Serine 173 is subject to Phosphoserine. Over residues 208–222 the composition is skewed to basic residues; that stretch reads AAKKKTDKKRALRRL.

Belongs to the ubiquitin-conjugating enzyme family. In terms of assembly, component of the APC/C complex, composed of at least 14 distinct subunits that assemble into a complex of at least 19 chains with a combined molecular mass of around 1.2 MDa. Within this complex, directly interacts with ANAPC2 and ANAPC4. Interacts with CDC20, FZR1/CDH1 and VHL. Autoubiquitinated by the APC/C complex during G1, leading to its degradation by the proteasome.

It carries out the reaction S-ubiquitinyl-[E1 ubiquitin-activating enzyme]-L-cysteine + [E2 ubiquitin-conjugating enzyme]-L-cysteine = [E1 ubiquitin-activating enzyme]-L-cysteine + S-ubiquitinyl-[E2 ubiquitin-conjugating enzyme]-L-cysteine.. Its pathway is protein modification; protein ubiquitination. Functionally, accepts ubiquitin from the E1 complex and catalyzes its covalent attachment to other proteins. Catalyzes 'Lys-11'-linked polyubiquitination. Acts as an essential factor of the anaphase promoting complex/cyclosome (APC/C), a cell cycle-regulated ubiquitin ligase that controls progression through mitosis. Acts by specifically elongating 'Lys-11'-linked polyubiquitin chains initiated by the E2 enzyme UBE2C/UBCH10 on APC/C substrates, enhancing the degradation of APC/C substrates by the proteasome and promoting mitotic exit. Also acts by elongating ubiquitin chains initiated by the E2 enzyme UBE2D1/UBCH5 in vitro; it is however unclear whether UBE2D1/UBCH5 acts as an E2 enzyme for the APC/C in vivo. Also involved in ubiquitination and subsequent degradation of VHL, resulting in an accumulation of HIF1A. In vitro able to promote polyubiquitination using all 7 ubiquitin Lys residues, except 'Lys-48'-linked polyubiquitination. This Homo sapiens (Human) protein is Ubiquitin-conjugating enzyme E2 S (UBE2S).